A 521-amino-acid polypeptide reads, in one-letter code: Probable protein kinase UbiB (521 aa).

One can recognise a Protein kinase domain in the interval 119 to 497 (QFDETPIASA…QKRTNRLLQT (379 aa)). Residues 125–133 (IASASIAQV) and lysine 151 contribute to the ATP site. The active-site Proton acceptor is the aspartate 286. The helical transmembrane segment at 496 to 516 (QTIIYGGIGFVLGLLAMQLLV) threads the bilayer.

Belongs to the ABC1 family. UbiB subfamily.

Its subcellular location is the cell inner membrane. It functions in the pathway cofactor biosynthesis; ubiquinone biosynthesis [regulation]. Is probably a protein kinase regulator of UbiI activity which is involved in aerobic coenzyme Q (ubiquinone) biosynthesis. This is Probable protein kinase UbiB from Variovorax paradoxus (strain S110).